The chain runs to 434 residues: Nicotinate phosphoribosyltransferase (434 aa).

A Phosphohistidine; by autocatalysis modification is found at His242.

It belongs to the NAPRTase family. Post-translationally, transiently phosphorylated on a His residue during the reaction cycle. Phosphorylation strongly increases the affinity for substrates and increases the rate of nicotinate D-ribonucleotide production. Dephosphorylation regenerates the low-affinity form of the enzyme, leading to product release.

The enzyme catalyses nicotinate + 5-phospho-alpha-D-ribose 1-diphosphate + ATP + H2O = nicotinate beta-D-ribonucleotide + ADP + phosphate + diphosphate. It functions in the pathway cofactor biosynthesis; NAD(+) biosynthesis; nicotinate D-ribonucleotide from nicotinate: step 1/1. Catalyzes the synthesis of beta-nicotinate D-ribonucleotide from nicotinate and 5-phospho-D-ribose 1-phosphate at the expense of ATP. This Bartonella tribocorum (strain CIP 105476 / IBS 506) protein is Nicotinate phosphoribosyltransferase.